The following is a 474-amino-acid chain: Trichothecene 3-O-acetyltransferase (474 aa).

This sequence belongs to the trichothecene 3-O-acetyltransferase family.

Its function is as follows. Trichothecene 3-O-acetyltransferase involved in self-protection against trichothecenes, mycotoxins acting as eukaryotic protein synthesis inhibitors. Its existence is surprising in a non-trichothecene producer organism which needs no self-protection again endogenic trichothecenes. The persistence of this non-essential gene may be due to a selective advantage that it may confer, like a resistance to exogenic trichothecenes. This chain is Trichothecene 3-O-acetyltransferase (AYT1), found in Saccharomyces cerevisiae (strain ATCC 204508 / S288c) (Baker's yeast).